The sequence spans 316 residues: MIQKIIFATLLSFTVAIISGRFFIPYLRKLKFGQKVREDGPKTHLKKSGTPTMGGIIFVVATFLTSLIFSPWNKYLFILLAGFLGYGLIGFADDFLKVYFKRSLGLRAREKLLAQFLLAIVISWFIKSNVGTEIIVPFFKRSVDLANFYIPFAVFIIVGTVNSVNLTDGLDGLAAGVSTIVMAFFAMIALFLNDVTYGVFSASLTGGLLGFLRYNKHPAEVFMGDTGSLAIGGAVATVALLTKLPLILPVLGIIYVAEAISVILQVFSFKLFGKRIFKMSPLHHHFELSGWKEEKVVYSFWLVTLIALFVSFYSLS.

10 helical membrane-spanning segments follow: residues 5-25, 52-72, 76-96, 116-136, 145-165, 172-192, 195-212, 221-241, 244-264, and 296-316; these read IIFA…FFIP, TMGG…FSPW, LFIL…DDFL, FLLA…EIIV, LANF…NSVN, GLAA…ALFL, VTYG…LGFL, VFMG…VALL, LPLI…SVIL, and VVYS…YSLS.

This sequence belongs to the glycosyltransferase 4 family. MraY subfamily. The cofactor is Mg(2+).

It localises to the cell membrane. It carries out the reaction UDP-N-acetyl-alpha-D-muramoyl-L-alanyl-gamma-D-glutamyl-meso-2,6-diaminopimeloyl-D-alanyl-D-alanine + di-trans,octa-cis-undecaprenyl phosphate = di-trans,octa-cis-undecaprenyl diphospho-N-acetyl-alpha-D-muramoyl-L-alanyl-D-glutamyl-meso-2,6-diaminopimeloyl-D-alanyl-D-alanine + UMP. The protein operates within cell wall biogenesis; peptidoglycan biosynthesis. In terms of biological role, catalyzes the initial step of the lipid cycle reactions in the biosynthesis of the cell wall peptidoglycan: transfers peptidoglycan precursor phospho-MurNAc-pentapeptide from UDP-MurNAc-pentapeptide onto the lipid carrier undecaprenyl phosphate, yielding undecaprenyl-pyrophosphoryl-MurNAc-pentapeptide, known as lipid I. This is Phospho-N-acetylmuramoyl-pentapeptide-transferase from Caldanaerobacter subterraneus subsp. tengcongensis (strain DSM 15242 / JCM 11007 / NBRC 100824 / MB4) (Thermoanaerobacter tengcongensis).